Consider the following 637-residue polypeptide: MGGSSKTVRKLEVATPVPADIDIANAVEPLHIADIAADLNLSPRHYDLYGKYKAKVLLSVLDEVQETQDGYYVVVGGITPTPLGEGKSTTTVGLCQALGAFLDKKVVTCLRQPSQGPTFGIKGGAAGGGYSQVIPMDEFNLHLTGDIHAITASNNLLAAAIDTRMFHESTQSDKALFNRLCPPNKEGKRTFCNIMHRRLKKLGIDKTNPDDLTPEEVTKFARLDIDPDSITWRRVMDVNDRFLRKISVGQGPDEKGMVRETGFDISVASEIMAVLALTTSLADMRERLGKMVIGNSKAGEPITADDLGLGGALTVLMKDAINPTLMQTLEGTPVLVHAGPFANIAHGNSSIVADKIALKLVGPGGFVVTEAGFGSDIGTEKFMNIKCRYSGLTPQCAIVVATVRALKMHGGGPQVVAGKPLDRAYLTENVGLVEAGCVNLARHIINTKAYGSNVVVAINMFSSDTEAELNAVKKAAMDAGAFDAVICTHHAHGGKGAVDLGIAVQKACENVTQPLRFLYPLDISIKEKIEAIAKSYGAAGVEYSEQAEKKIEMYSKQGFSNLPICMAKTQYSFSHNAAEKGAPSGFILPIRDVRGSIGAGFIYPLVGTMSTMPGLPTRPCFFDIDLDTTTGKVIGLS.

An ATP-binding site is contributed by 81-88 (TPLGEGKS).

The protein belongs to the formate--tetrahydrofolate ligase family. In terms of assembly, homodimer.

The enzyme catalyses (6S)-5,6,7,8-tetrahydrofolate + formate + ATP = (6R)-10-formyltetrahydrofolate + ADP + phosphate. It functions in the pathway one-carbon metabolism; tetrahydrofolate interconversion. The chain is Formate--tetrahydrofolate ligase from Spinacia oleracea (Spinach).